Reading from the N-terminus, the 616-residue chain is Dihydroxy-acid dehydratase (616 aa).

D81 provides a ligand contact to Mg(2+). Residue C122 participates in [2Fe-2S] cluster binding. 2 residues coordinate Mg(2+): D123 and K124. Residue K124 is modified to N6-carboxylysine. C195 is a [2Fe-2S] cluster binding site. A Mg(2+)-binding site is contributed by E491. S517 functions as the Proton acceptor in the catalytic mechanism.

This sequence belongs to the IlvD/Edd family. In terms of assembly, homodimer. It depends on [2Fe-2S] cluster as a cofactor. The cofactor is Mg(2+).

It catalyses the reaction (2R)-2,3-dihydroxy-3-methylbutanoate = 3-methyl-2-oxobutanoate + H2O. The catalysed reaction is (2R,3R)-2,3-dihydroxy-3-methylpentanoate = (S)-3-methyl-2-oxopentanoate + H2O. The protein operates within amino-acid biosynthesis; L-isoleucine biosynthesis; L-isoleucine from 2-oxobutanoate: step 3/4. It participates in amino-acid biosynthesis; L-valine biosynthesis; L-valine from pyruvate: step 3/4. Its function is as follows. Functions in the biosynthesis of branched-chain amino acids. Catalyzes the dehydration of (2R,3R)-2,3-dihydroxy-3-methylpentanoate (2,3-dihydroxy-3-methylvalerate) into 2-oxo-3-methylpentanoate (2-oxo-3-methylvalerate) and of (2R)-2,3-dihydroxy-3-methylbutanoate (2,3-dihydroxyisovalerate) into 2-oxo-3-methylbutanoate (2-oxoisovalerate), the penultimate precursor to L-isoleucine and L-valine, respectively. In Klebsiella pneumoniae subsp. pneumoniae (strain ATCC 700721 / MGH 78578), this protein is Dihydroxy-acid dehydratase.